A 530-amino-acid chain; its full sequence is Anthranilate synthase component 1, pyocyanine specific (530 aa).

Residue 331–332 (GT) participates in substrate binding. Glutamate 364 is a Mg(2+) binding site. Substrate-binding positions include tyrosine 452, arginine 472, 486 to 488 (GAG), and glycine 488. Glutamate 501 provides a ligand contact to Mg(2+).

Belongs to the anthranilate synthase component I family. In terms of assembly, heterotetramer consisting of two non-identical subunits: a beta subunit (PhnB) and a large alpha subunit (PhnA). Mg(2+) serves as cofactor.

The enzyme catalyses chorismate + L-glutamine = anthranilate + pyruvate + L-glutamate + H(+). It participates in secondary metabolite biosynthesis; pyocyanine biosynthesis. Part of a heterotetrameric complex that catalyzes the two-step biosynthesis of anthranilate, a precursor for Pseudomonas quinolone signal (2-heptyl-3-hydroxy-4-quinolone; PQS) production which is required to induce the genes for the biosynthesis of the virulence factor pyocyanine (PCN), a characteristic blue-green phenazine pigment produced by P.aeruginosa. In the first step, the glutamine-binding beta subunit (PhnB) of anthranilate synthase (AS) provides the glutamine amidotransferase activity which generates ammonia as a substrate that, along with chorismate, is used in the second step, catalyzed by the large alpha subunit of AS (PhnA) to produce anthranilate. The sequence is that of Anthranilate synthase component 1, pyocyanine specific from Pseudomonas aeruginosa (strain ATCC 15692 / DSM 22644 / CIP 104116 / JCM 14847 / LMG 12228 / 1C / PRS 101 / PAO1).